The following is a 517-amino-acid chain: Maturase K (517 aa).

The protein belongs to the intron maturase 2 family. MatK subfamily.

The protein localises to the plastid. It localises to the chloroplast. Functionally, usually encoded in the trnK tRNA gene intron. Probably assists in splicing its own and other chloroplast group II introns. This chain is Maturase K, found in Veronica arvensis (Wall speedwell).